Reading from the N-terminus, the 116-residue chain is U11-theraphotoxin-Hhn1b (116 aa).

The first 21 residues, 1 to 21 (MNTVRVTFLLVFVLAVSLGQA), serve as a signal peptide directing secretion. Residues 22 to 74 (DKDENRMEMQEKTEQGKSYLDFAENLLLQKLEELEAKLLEEDSEESRNSRQKR) constitute a propeptide that is removed on maturation. Over residues 60 to 69 (LEEDSEESRN) the composition is skewed to basic and acidic residues. A disordered region spans residues 60-83 (LEEDSEESRNSRQKRCIGEGVPCD). Disulfide bonds link cysteine 75/cysteine 90, cysteine 82/cysteine 95, and cysteine 89/cysteine 110.

Belongs to the neurotoxin 14 (magi-1) family. 01 (HNTX-16) subfamily. As to expression, expressed by the venom gland.

The protein localises to the secreted. Its function is as follows. Probable ion channel inhibitor. This is U11-theraphotoxin-Hhn1b from Cyriopagopus hainanus (Chinese bird spider).